Here is a 561-residue protein sequence, read N- to C-terminus: Lanosterol 14-alpha demethylase (561 aa).

Residue Cys-501 coordinates heme.

This sequence belongs to the cytochrome P450 family. The cofactor is heme.

The protein localises to the membrane. It catalyses the reaction a 14alpha-methyl steroid + 3 reduced [NADPH--hemoprotein reductase] + 3 O2 = a Delta(14) steroid + formate + 3 oxidized [NADPH--hemoprotein reductase] + 4 H2O + 4 H(+). It carries out the reaction a 14alpha-methyl steroid + reduced [NADPH--hemoprotein reductase] + O2 = a 14alpha-hydroxymethyl steroid + oxidized [NADPH--hemoprotein reductase] + H2O + H(+). The catalysed reaction is a 14alpha-hydroxymethyl steroid + reduced [NADPH--hemoprotein reductase] + O2 = a 14alpha-formyl steroid + oxidized [NADPH--hemoprotein reductase] + 2 H2O + H(+). The enzyme catalyses a 14alpha-formyl steroid + reduced [NADPH--hemoprotein reductase] + O2 = a Delta(14) steroid + formate + oxidized [NADPH--hemoprotein reductase] + H2O + 2 H(+). It catalyses the reaction lanosterol + 3 reduced [NADPH--hemoprotein reductase] + 3 O2 = 4,4-dimethyl-5alpha-cholesta-8,14,24-trien-3beta-ol + formate + 3 oxidized [NADPH--hemoprotein reductase] + 4 H2O + 4 H(+). It carries out the reaction lanosterol + reduced [NADPH--hemoprotein reductase] + O2 = 32-hydroxylanosterol + oxidized [NADPH--hemoprotein reductase] + H2O + H(+). The catalysed reaction is 32-hydroxylanosterol + reduced [NADPH--hemoprotein reductase] + O2 = 32-oxolanosterol + oxidized [NADPH--hemoprotein reductase] + 2 H2O + H(+). The enzyme catalyses 32-oxolanosterol + reduced [NADPH--hemoprotein reductase] + O2 = 4,4-dimethyl-5alpha-cholesta-8,14,24-trien-3beta-ol + formate + oxidized [NADPH--hemoprotein reductase] + H2O + 2 H(+). It catalyses the reaction eburicol + 3 reduced [NADPH--hemoprotein reductase] + 3 O2 = 14-demethyleburicol + formate + 3 oxidized [NADPH--hemoprotein reductase] + 4 H2O + 4 H(+). It carries out the reaction eburicol + reduced [NADPH--hemoprotein reductase] + O2 = 32-hydroxyeburicol + oxidized [NADPH--hemoprotein reductase] + H2O + H(+). The catalysed reaction is 32-hydroxyeburicol + reduced [NADPH--hemoprotein reductase] + O2 = 32-oxoeburicol + oxidized [NADPH--hemoprotein reductase] + 2 H2O + H(+). The enzyme catalyses 32-oxoeburicol + reduced [NADPH--hemoprotein reductase] + O2 = 14-demethyleburicol + formate + oxidized [NADPH--hemoprotein reductase] + H2O + 2 H(+). The protein operates within steroid biosynthesis; zymosterol biosynthesis; zymosterol from lanosterol: step 1/6. Sterol 14alpha-demethylase that plays a critical role in the third module of ergosterol biosynthesis pathway, being ergosterol the major sterol component in fungal membranes that participates in a variety of functions. The third module or late pathway involves the ergosterol synthesis itself through consecutive reactions that mainly occur in the endoplasmic reticulum (ER) membrane. In filamentous fungi, during the initial step of this module, lanosterol (lanosta-8,24-dien-3beta-ol) can be metabolized to eburicol. Sterol 14alpha-demethylase catalyzes the three-step oxidative removal of the 14alpha-methyl group (C-32) of both these sterols in the form of formate, and converts eburicol and lanosterol to 14-demethyleburicol (4,4,24-trimethylergosta-8,14,24(28)-trienol) and 4,4-dimethyl-5alpha-cholesta-8,14,24-trien-3beta-ol, respectively, which are further metabolized by other enzymes in the pathway to ergosterol. Can also use substrates not intrinsic to fungi, such as 24,25-dihydrolanosterol (DHL), producing 4,4-dimethyl-8,14-cholestadien-3-beta-ol, but at lower rates than the endogenous substrates. This chain is Lanosterol 14-alpha demethylase (ERG11), found in Mycosarcoma maydis (Corn smut fungus).